A 148-amino-acid chain; its full sequence is Small ribosomal subunit protein eS19 (148 aa).

This sequence belongs to the eukaryotic ribosomal protein eS19 family.

In Dictyostelium discoideum (Social amoeba), this protein is Small ribosomal subunit protein eS19 (rps19).